A 353-amino-acid polypeptide reads, in one-letter code: Photosystem II protein D1 (353 aa).

Thr2 is modified (N-acetylthreonine). Thr2 is subject to Phosphothreonine. The next 3 helical transmembrane spans lie at 29–46, 118–133, and 142–156; these read YIGW…TATS, HFFI…EWEL, and WIAV…AATA. His118 contributes to the chlorophyll a binding site. Tyr126 is a binding site for pheophytin a. Residues Asp170 and Glu189 each contribute to the [CaMn4O5] cluster site. The helical transmembrane segment at 197 to 218 threads the bilayer; it reads FHMLGVAGVFGGSLFSAMHGSL. His198 is a chlorophyll a binding site. A quinone contacts are provided by residues His215 and 264-265; that span reads SF. Position 215 (His215) interacts with Fe cation. Fe cation is bound at residue His272. The chain crosses the membrane as a helical span at residues 274–288; the sequence is FLAAWPVIGIWFTAL. His332, Glu333, Asp342, and Ala344 together coordinate [CaMn4O5] cluster. A propeptide spanning residues 345 to 353 is cleaved from the precursor; that stretch reads AFEAPSINA.

It belongs to the reaction center PufL/M/PsbA/D family. As to quaternary structure, PSII is composed of 1 copy each of membrane proteins PsbA, PsbB, PsbC, PsbD, PsbE, PsbF, PsbH, PsbI, PsbJ, PsbK, PsbL, PsbM, PsbT, PsbX, PsbY, PsbZ, Psb30/Ycf12, at least 3 peripheral proteins of the oxygen-evolving complex and a large number of cofactors. It forms dimeric complexes. Requires The D1/D2 heterodimer binds P680, chlorophylls that are the primary electron donor of PSII, and subsequent electron acceptors. It shares a non-heme iron and each subunit binds pheophytin, quinone, additional chlorophylls, carotenoids and lipids. D1 provides most of the ligands for the Mn4-Ca-O5 cluster of the oxygen-evolving complex (OEC). There is also a Cl(-1) ion associated with D1 and D2, which is required for oxygen evolution. The PSII complex binds additional chlorophylls, carotenoids and specific lipids. as cofactor. In terms of processing, tyr-161 forms a radical intermediate that is referred to as redox-active TyrZ, YZ or Y-Z. C-terminally processed by CTPA; processing is essential to allow assembly of the oxygen-evolving complex and thus photosynthetic growth.

Its subcellular location is the plastid. The protein localises to the chloroplast thylakoid membrane. It catalyses the reaction 2 a plastoquinone + 4 hnu + 2 H2O = 2 a plastoquinol + O2. Photosystem II (PSII) is a light-driven water:plastoquinone oxidoreductase that uses light energy to abstract electrons from H(2)O, generating O(2) and a proton gradient subsequently used for ATP formation. It consists of a core antenna complex that captures photons, and an electron transfer chain that converts photonic excitation into a charge separation. The D1/D2 (PsbA/PsbD) reaction center heterodimer binds P680, the primary electron donor of PSII as well as several subsequent electron acceptors. The sequence is that of Photosystem II protein D1 from Chlamydomonas moewusii (Chlamydomonas eugametos).